The primary structure comprises 306 residues: Glutaminase (306 aa).

Ser-64, Asn-115, Glu-159, Asn-166, Tyr-190, Tyr-242, and Val-260 together coordinate substrate.

The protein belongs to the glutaminase family. Homotetramer.

It carries out the reaction L-glutamine + H2O = L-glutamate + NH4(+). This chain is Glutaminase, found in Aeromonas salmonicida (strain A449).